A 476-amino-acid chain; its full sequence is ATP synthase subunit beta (476 aa).

Residue 152–159 coordinates ATP; that stretch reads GGAGVGKT.

This sequence belongs to the ATPase alpha/beta chains family. F-type ATPases have 2 components, CF(1) - the catalytic core - and CF(0) - the membrane proton channel. CF(1) has five subunits: alpha(3), beta(3), gamma(1), delta(1), epsilon(1). CF(0) has three main subunits: a(1), b(2) and c(9-12). The alpha and beta chains form an alternating ring which encloses part of the gamma chain. CF(1) is attached to CF(0) by a central stalk formed by the gamma and epsilon chains, while a peripheral stalk is formed by the delta and b chains.

The protein resides in the cell inner membrane. The catalysed reaction is ATP + H2O + 4 H(+)(in) = ADP + phosphate + 5 H(+)(out). Functionally, produces ATP from ADP in the presence of a proton gradient across the membrane. The catalytic sites are hosted primarily by the beta subunits. The chain is ATP synthase subunit beta from Acidiphilium cryptum (strain JF-5).